The sequence spans 179 residues: Putative FBD-associated F-box protein At3g12840 (179 aa).

The 47-residue stretch at 14 to 60 (AARINDLPDDLLATVLSFVPTKDAVATSILSKRWRPIWKRAVNLESD) folds into the F-box domain. One can recognise an FBD domain in the interval 101 to 152 (KWKQPDFVPLSLYRSLEAFEWIGFKGREKTEKKAAFHILRNACNLKTMAITT).

The sequence is that of Putative FBD-associated F-box protein At3g12840 from Arabidopsis thaliana (Mouse-ear cress).